Reading from the N-terminus, the 433-residue chain is 3-phosphoshikimate 1-carboxyvinyltransferase (433 aa).

3-phosphoshikimate contacts are provided by K22, S23, and R27. K22 is a phosphoenolpyruvate binding site. 2 residues coordinate phosphoenolpyruvate: G94 and R122. 3-phosphoshikimate-binding residues include S168, S169, Q170, S196, D319, and K346. Q170 lines the phosphoenolpyruvate pocket. The active-site Proton acceptor is the D319. Residues R350, R394, and K418 each contribute to the phosphoenolpyruvate site.

It belongs to the EPSP synthase family. Monomer.

The protein localises to the cytoplasm. It carries out the reaction 3-phosphoshikimate + phosphoenolpyruvate = 5-O-(1-carboxyvinyl)-3-phosphoshikimate + phosphate. Its pathway is metabolic intermediate biosynthesis; chorismate biosynthesis; chorismate from D-erythrose 4-phosphate and phosphoenolpyruvate: step 6/7. Catalyzes the transfer of the enolpyruvyl moiety of phosphoenolpyruvate (PEP) to the 5-hydroxyl of shikimate-3-phosphate (S3P) to produce enolpyruvyl shikimate-3-phosphate and inorganic phosphate. This Nitrosomonas eutropha (strain DSM 101675 / C91 / Nm57) protein is 3-phosphoshikimate 1-carboxyvinyltransferase.